The following is a 201-amino-acid chain: Recombination protein RecR (201 aa).

The segment at 57-72 adopts a C4-type zinc-finger fold; that stretch reads CADCRTFTEQEICTIC. Positions 81-176 constitute a Toprim domain; it reads GLICVVESPA…DASRIAHGVP (96 aa).

Belongs to the RecR family.

Functionally, may play a role in DNA repair. It seems to be involved in an RecBC-independent recombinational process of DNA repair. It may act with RecF and RecO. The polypeptide is Recombination protein RecR (Erwinia tasmaniensis (strain DSM 17950 / CFBP 7177 / CIP 109463 / NCPPB 4357 / Et1/99)).